The following is a 1590-amino-acid chain: Defective chorion protein, FC177 isoform (1590 aa).

The N-terminal stretch at 1 to 19 is a signal peptide; the sequence is MRLFSLLPLLALLVVQAAG. 3 disordered regions span residues 23 to 60, 184 to 212, and 268 to 294; these read VTSD…PSIN, APAP…PDAP, and PAQP…EDPY. Residues 32–41 are compositionally biased toward polar residues; it reads AGSTTNSTTD. Residues 268–280 show a composition bias toward low complexity; that stretch reads PAQPAAAGTDAQA. 5 tandem repeats follow at residues 493–518, 519–544, 545–570, 571–596, and 597–622. The interval 493 to 788 is 12 X 26 AA approximate tandem repeats, Glu, Met-rich; that stretch reads QNPMMMQQRQ…IQQQQRQMMQ (296 aa). Residues 623-652 form a 6; approximate repeat; that stretch reads QNPMMMQQRQWSEEQAKIQHDQQMAQQMAQ. The 7; approximate repeat unit spans residues 653–680; it reads QGLMMTEQRQRQWSEDQAKIQQAQQMAQ. The stretch at 681–696 is one 8; approximate repeat; that stretch reads QTPMMMPQMQQRQWTE. The stretch at 697–720 is one 9; approximate repeat; sequence DPQMVQQMQQRQWAEDQTRMQMAQ. The stretch at 721–733 is one 10; approximate repeat; sequence QNPMMQQQRQMAE. The stretch at 734–758 is one 11; approximate repeat; it reads NPQMMQQRQWSEEQTKIEQAQQMAQ. A 12; approximate repeat occupies 759–788; that stretch reads QNQMMMQQMQQRQWSEDQAQIQQQQRQMMQ. Disordered regions lie at residues 843–875, 944–983, 1119–1221, 1261–1352, 1375–1515, and 1538–1590; these read GPQM…SKSA, RTIN…EHRV, EEDA…TKSI, PVTE…DDNN, FAQG…QATV, and EKKS…QTKA. Positions 957–977 are enriched in polar residues; that stretch reads SESQKSNSNPPTTLTPAPQEQ. Positions 1119-1130 are enriched in acidic residues; that stretch reads EEDAQQEPMEEE. Residues 1131 to 1148 show a composition bias toward basic and acidic residues; sequence QLQHDPNTEPQYNHKDFV. Over residues 1151 to 1195 the composition is skewed to low complexity; that stretch reads TTSTASPITSTTEAATPTGSDSTSEATVTPEVTTTTSTSTTTTTE. The segment covering 1205–1221 has biased composition (polar residues); the sequence is QQDSQAEAESSHVTKSI. Residues 1272-1288 show a composition bias toward basic and acidic residues; that stretch reads EPSKQEDKPKVEEKVIA. Residues 1295–1306 show a composition bias toward acidic residues; it reads EQEEELEEDEDS. Composition is skewed to low complexity over residues 1307-1319 and 1435-1452; these read TSIS…PSPS and DSGS…TPSP. Over residues 1493–1504 the composition is skewed to basic residues; that stretch reads QRPKKSMSKPKK. Positions 1505–1515 are enriched in low complexity; it reads QSSQVTTQATV. Residues 1554–1576 show a composition bias toward basic residues; it reads TKPKSIKPVKVIKRKRLRRRQHK. Residues 1577 to 1590 are compositionally biased toward polar residues; it reads SIATTIRSPIQTKA.

Its subcellular location is the secreted. Functionally, required for proper assembly of the eggshell. The polypeptide is Defective chorion protein, FC177 isoform (Drosophila melanogaster (Fruit fly)).